Here is a 256-residue protein sequence, read N- to C-terminus: Phosphatidylglycerol--prolipoprotein diacylglyceryl transferase (256 aa).

The next 3 membrane-spanning stretches (helical) occupy residues 19-39 (VHWY…LGYW), 56-76 (LIFY…MLFY), and 91-111 (IWEG…AAWL). Position 139 (Arg-139) interacts with a 1,2-diacyl-sn-glycero-3-phospho-(1'-sn-glycerol). A helical transmembrane segment spans residues 231-251 (FGWLTMGQVLSIPMLLIGIWL).

This sequence belongs to the Lgt family.

The protein resides in the cell inner membrane. The catalysed reaction is L-cysteinyl-[prolipoprotein] + a 1,2-diacyl-sn-glycero-3-phospho-(1'-sn-glycerol) = an S-1,2-diacyl-sn-glyceryl-L-cysteinyl-[prolipoprotein] + sn-glycerol 1-phosphate + H(+). The protein operates within protein modification; lipoprotein biosynthesis (diacylglyceryl transfer). In terms of biological role, catalyzes the transfer of the diacylglyceryl group from phosphatidylglycerol to the sulfhydryl group of the N-terminal cysteine of a prolipoprotein, the first step in the formation of mature lipoproteins. This chain is Phosphatidylglycerol--prolipoprotein diacylglyceryl transferase, found in Legionella pneumophila subsp. pneumophila (strain Philadelphia 1 / ATCC 33152 / DSM 7513).